The sequence spans 344 residues: DNA-directed RNA polymerase subunit alpha (344 aa).

Positions 1–239 (MADHWNKLTR…DQLQSFISFD (239 aa)) are alpha N-terminal domain (alpha-NTD). Residues 254–344 (VLPYDHNLLR…ENLSKQYSED (91 aa)) form an alpha C-terminal domain (alpha-CTD) region.

The protein belongs to the RNA polymerase alpha chain family. Homodimer. The RNAP catalytic core consists of 2 alpha, 1 beta, 1 beta' and 1 omega subunit. When a sigma factor is associated with the core the holoenzyme is formed, which can initiate transcription.

The catalysed reaction is RNA(n) + a ribonucleoside 5'-triphosphate = RNA(n+1) + diphosphate. In terms of biological role, DNA-dependent RNA polymerase catalyzes the transcription of DNA into RNA using the four ribonucleoside triphosphates as substrates. The sequence is that of DNA-directed RNA polymerase subunit alpha from Anaplasma phagocytophilum (strain HZ).